Reading from the N-terminus, the 139-residue chain is Chorion protein S16 (139 aa).

The signal sequence occupies residues 1–21; the sequence is MSVNYMRLLCLMACCFSVCLA.

This sequence belongs to the chorion protein S16 family.

It localises to the secreted. In terms of biological role, chorion membrane (egg shell) protein; plays a role in protecting the egg from the environment. This chain is Chorion protein S16 (Cp16), found in Drosophila virilis (Fruit fly).